A 354-amino-acid polypeptide reads, in one-letter code: Small ribosomal subunit biogenesis GTPase RsgA (354 aa).

Residues Met1 to Gly46 form a disordered region. A compositionally biased stretch (basic and acidic residues) spans Ala17–Thr32. Residues Pro33 to Gly46 are compositionally biased toward polar residues. The region spanning His108 to Phe276 is the CP-type G domain. GTP-binding positions include Asn164 to Asp167 and Gly218 to Ser226. Cys300, Cys305, His307, and Cys313 together coordinate Zn(2+).

It belongs to the TRAFAC class YlqF/YawG GTPase family. RsgA subfamily. As to quaternary structure, monomer. Associates with 30S ribosomal subunit, binds 16S rRNA. It depends on Zn(2+) as a cofactor.

It localises to the cytoplasm. Its function is as follows. One of several proteins that assist in the late maturation steps of the functional core of the 30S ribosomal subunit. Helps release RbfA from mature subunits. May play a role in the assembly of ribosomal proteins into the subunit. Circularly permuted GTPase that catalyzes slow GTP hydrolysis, GTPase activity is stimulated by the 30S ribosomal subunit. This is Small ribosomal subunit biogenesis GTPase RsgA from Shewanella oneidensis (strain ATCC 700550 / JCM 31522 / CIP 106686 / LMG 19005 / NCIMB 14063 / MR-1).